The chain runs to 308 residues: Putative transposon Ty5-1 protein YCL074W (308 aa).

This Saccharomyces cerevisiae (strain ATCC 204508 / S288c) (Baker's yeast) protein is Putative transposon Ty5-1 protein YCL074W (TY5A).